Consider the following 888-residue polypeptide: DNA mismatch repair protein MutS (888 aa).

Position 641–648 (641–648) interacts with ATP; the sequence is GPNMAGKS.

This sequence belongs to the DNA mismatch repair MutS family.

Its function is as follows. This protein is involved in the repair of mismatches in DNA. It is possible that it carries out the mismatch recognition step. This protein has a weak ATPase activity. The sequence is that of DNA mismatch repair protein MutS from Rickettsia bellii (strain RML369-C).